The following is an 874-amino-acid chain: Alanine--tRNA ligase (874 aa).

4 residues coordinate Zn(2+): histidine 562, histidine 566, cysteine 665, and histidine 669.

This sequence belongs to the class-II aminoacyl-tRNA synthetase family. Zn(2+) is required as a cofactor.

The protein localises to the cytoplasm. The enzyme catalyses tRNA(Ala) + L-alanine + ATP = L-alanyl-tRNA(Ala) + AMP + diphosphate. Functionally, catalyzes the attachment of alanine to tRNA(Ala) in a two-step reaction: alanine is first activated by ATP to form Ala-AMP and then transferred to the acceptor end of tRNA(Ala). Also edits incorrectly charged Ser-tRNA(Ala) and Gly-tRNA(Ala) via its editing domain. The polypeptide is Alanine--tRNA ligase (Pseudomonas putida (strain GB-1)).